We begin with the raw amino-acid sequence, 282 residues long: Small ribosomal subunit protein uS2 (282 aa).

Positions 260-282 (KRRRSKVYKEEEREVVTNEDESR) are disordered. Basic and acidic residues predominate over residues 266–282 (VYKEEEREVVTNEDESR).

Belongs to the universal ribosomal protein uS2 family.

The sequence is that of Small ribosomal subunit protein uS2 from Wolbachia pipientis wMel.